The chain runs to 778 residues: Probable dipeptidyl peptidase 4 (778 aa).

The N-terminal stretch at 1–18 is a signal peptide; sequence MKTSQFLSLLLLAGIAQA. N-linked (GlcNAc...) asparagine glycans are attached at residues Asn-84, Asn-114, and Asn-222. Residues Ser-616, Asp-693, and His-728 each act as charge relay system in the active site.

It belongs to the peptidase S9B family.

The protein resides in the secreted. The catalysed reaction is Release of an N-terminal dipeptide, Xaa-Yaa-|-Zaa-, from a polypeptide, preferentially when Yaa is Pro, provided Zaa is neither Pro nor hydroxyproline.. Extracellular dipeptidyl-peptidase which removes N-terminal dipeptides sequentially from polypeptides having unsubstituted N-termini provided that the penultimate residue is proline. Contributes to pathogenicity. In Arthroderma benhamiae (strain ATCC MYA-4681 / CBS 112371) (Trichophyton mentagrophytes), this protein is Probable dipeptidyl peptidase 4 (DPP4).